The primary structure comprises 498 residues: Galactose-1-phosphate uridylyltransferase (498 aa).

This sequence belongs to the galactose-1-phosphate uridylyltransferase type 2 family.

It is found in the cytoplasm. The catalysed reaction is alpha-D-galactose 1-phosphate + UDP-alpha-D-glucose = alpha-D-glucose 1-phosphate + UDP-alpha-D-galactose. It functions in the pathway carbohydrate metabolism; galactose metabolism. This Latilactobacillus sakei subsp. sakei (strain 23K) (Lactobacillus sakei subsp. sakei) protein is Galactose-1-phosphate uridylyltransferase.